The primary structure comprises 247 residues: Eukaryotic translation initiation factor 6 (247 aa).

Ser-174 and Ser-175 each carry phosphoserine; by CK1.

It belongs to the eIF-6 family. In terms of assembly, monomer. Associates with the 60S ribosomal subunit. Post-translationally, phosphorylation at Ser-174 and Ser-175 promotes nuclear export.

The protein resides in the cytoplasm. The protein localises to the nucleus. It is found in the nucleolus. In terms of biological role, binds to the 60S ribosomal subunit and prevents its association with the 40S ribosomal subunit to form the 80S initiation complex in the cytoplasm. Is also involved in ribosome biogenesis. Associates with pre-60S subunits in the nucleus and is involved in its nuclear export. This Talaromyces stipitatus (strain ATCC 10500 / CBS 375.48 / QM 6759 / NRRL 1006) (Penicillium stipitatum) protein is Eukaryotic translation initiation factor 6 (tif6).